The primary structure comprises 76 residues: ATP synthase subunit c (76 aa).

2 helical membrane passes run 12 to 32 and 54 to 74; these read LGSI…GIIF and ILGF…PFVY.

It belongs to the ATPase C chain family. F-type ATPases have 2 components, F(1) - the catalytic core - and F(0) - the membrane proton channel. F(1) has five subunits: alpha(3), beta(3), gamma(1), delta(1), epsilon(1). F(0) has three main subunits: a(1), b(2) and c(10-14). The alpha and beta chains form an alternating ring which encloses part of the gamma chain. F(1) is attached to F(0) by a central stalk formed by the gamma and epsilon chains, while a peripheral stalk is formed by the delta and b chains.

It is found in the cell membrane. In terms of biological role, f(1)F(0) ATP synthase produces ATP from ADP in the presence of a proton or sodium gradient. F-type ATPases consist of two structural domains, F(1) containing the extramembraneous catalytic core and F(0) containing the membrane proton channel, linked together by a central stalk and a peripheral stalk. During catalysis, ATP synthesis in the catalytic domain of F(1) is coupled via a rotary mechanism of the central stalk subunits to proton translocation. Key component of the F(0) channel; it plays a direct role in translocation across the membrane. A homomeric c-ring of between 10-14 subunits forms the central stalk rotor element with the F(1) delta and epsilon subunits. The sequence is that of ATP synthase subunit c from Streptomyces coelicolor (strain ATCC BAA-471 / A3(2) / M145).